Reading from the N-terminus, the 283-residue chain is Tumor necrosis factor receptor superfamily member 14 (283 aa).

Positions 1-38 (MEPPGDWGPPPWRSTPKTDVLRLVLYLTFLGAPCYAPA) are cleaved as a signal peptide. At 39–202 (LPSCKEDEYP…GAGTSSSHWV (164 aa)) the chain is on the extracellular side. 8 disulfides stabilise this stretch: Cys-42-Cys-53, Cys-54-Cys-67, Cys-57-Cys-75, Cys-78-Cys-93, Cys-96-Cys-111, Cys-99-Cys-119, Cys-121-Cys-138, and Cys-127-Cys-135. TNFR-Cys repeat units follow at residues 42–75 (CKED…GTVC), 78–119 (CPPG…NAVC), and 121–162 (CSPG…DTLC). Asn-110 carries N-linked (GlcNAc...) asparagine glycosylation. The N-linked (GlcNAc...) asparagine glycan is linked to Asn-173. The chain crosses the membrane as a helical span at residues 203 to 223 (WWFLSGSLVIVIVCSTVGLII). At 224 to 283 (CVKRRKPRGDVVKVIVSVQRKRQEAEGEATVIEALQAPPDVTTVAVEETIPSFTGRSPNH) the chain is on the cytoplasmic side. Residue Ser-240 is modified to Phosphoserine.

Belongs to the tumor necrosis factor receptor superfamily. In terms of assembly, interacts with TRAF2, TRAF3 and TRAF5. Interacts (via CRD1/TNFR-Cys 1) with CD160; this interaction is direct. Interacts with LTA and TNFSF14. Interacts (via CRD1/TNFR-Cys 1) in cis and trans with BTLA; the cis interactions inhibits the trans interactions. (Microbial infection) Interacts with herpes simplex virus 1/HHV-1 envelope glycoprotein D. As to quaternary structure, (Microbial infection) Interacts with herpes simplex virus 2/HHV-2 envelope glycoprotein D. In terms of processing, N-glycosylated. As to expression, widely expressed, with the highest expression in lung, spleen and thymus. Expressed in a subpopulation of B cells and monocytes. Expressed in naive T cells.

The protein localises to the cell membrane. Receptor for four distinct ligands: The TNF superfamily members TNFSF14/LIGHT and homotrimeric LTA/lymphotoxin-alpha and the immunoglobulin superfamily members BTLA and CD160, altogether defining a complex stimulatory and inhibitory signaling network. Signals via the TRAF2-TRAF3 E3 ligase pathway to promote immune cell survival and differentiation. Participates in bidirectional cell-cell contact signaling between antigen presenting cells and lymphocytes. In response to ligation of TNFSF14/LIGHT, delivers costimulatory signals to T cells, promoting cell proliferation and effector functions. Interacts with CD160 on NK cells, enhancing IFNG production and anti-tumor immune response. In the context of bacterial infection, acts as a signaling receptor on epithelial cells for CD160 from intraepithelial lymphocytes, triggering the production of antimicrobial proteins and pro-inflammatory cytokines. Upon binding to CD160 on activated CD4+ T cells, down-regulates CD28 costimulatory signaling, restricting memory and alloantigen-specific immune response. May interact in cis (on the same cell) or in trans (on other cells) with BTLA. In cis interactions, appears to play an immune regulatory role inhibiting in trans interactions in naive T cells to maintain a resting state. In trans interactions, can predominate during adaptive immune response to provide survival signals to effector T cells. In terms of biological role, (Microbial infection) Acts as a receptor for Herpes simplex virus 1/HHV-1. Its function is as follows. (Microbial infection) Acts as a receptor for Herpes simplex virus 2/HHV-2. The polypeptide is Tumor necrosis factor receptor superfamily member 14 (Homo sapiens (Human)).